The sequence spans 427 residues: Adenylosuccinate synthetase (427 aa).

GTP-binding positions include 12–18 and 40–42; these read GDEGKGK and GHT. Residue Asp-13 is the Proton acceptor of the active site. 2 residues coordinate Mg(2+): Asp-13 and Gly-40. Residues 13-16, 38-41, Thr-128, Arg-142, Gln-223, Thr-238, and Arg-302 each bind IMP; these read DEGK and NAGH. His-41 acts as the Proton donor in catalysis. 298–304 contacts substrate; it reads TTTGRPR. Residues Arg-304, 330-332, and 412-414 contribute to the GTP site; these read KLD and SVG.

This sequence belongs to the adenylosuccinate synthetase family. Homodimer. The cofactor is Mg(2+).

Its subcellular location is the cytoplasm. It catalyses the reaction IMP + L-aspartate + GTP = N(6)-(1,2-dicarboxyethyl)-AMP + GDP + phosphate + 2 H(+). The protein operates within purine metabolism; AMP biosynthesis via de novo pathway; AMP from IMP: step 1/2. Functionally, plays an important role in the de novo pathway of purine nucleotide biosynthesis. Catalyzes the first committed step in the biosynthesis of AMP from IMP. The sequence is that of Adenylosuccinate synthetase from Carboxydothermus hydrogenoformans (strain ATCC BAA-161 / DSM 6008 / Z-2901).